A 393-amino-acid polypeptide reads, in one-letter code: PxcA-like protein (393 aa).

The next 4 helical transmembrane spans lie at 173–193 (FLIV…NLVF), 271–291 (IVNL…IIVF), 306–326 (FLAL…DMFV), and 354–374 (VYIF…LLIF).

This sequence belongs to the CemA family. PxcL subfamily.

The protein localises to the cell inner membrane. Together with PxcA, contributes to transient H(+) uptake following dark to light transition. Required for H(+) influx to activate the Calvin-Benson-Bassham cycle. May also be involved in CO(2) transport. In Synechocystis sp. (strain ATCC 27184 / PCC 6803 / Kazusa), this protein is PxcA-like protein.